Consider the following 446-residue polypeptide: ATP-dependent protease ATPase subunit HslU (446 aa).

ATP is bound by residues Val-17, 59 to 64 (GVGKTE), Asp-255, Glu-320, and Arg-392.

This sequence belongs to the ClpX chaperone family. HslU subfamily. As to quaternary structure, a double ring-shaped homohexamer of HslV is capped on each side by a ring-shaped HslU homohexamer. The assembly of the HslU/HslV complex is dependent on binding of ATP.

The protein resides in the cytoplasm. Its function is as follows. ATPase subunit of a proteasome-like degradation complex; this subunit has chaperone activity. The binding of ATP and its subsequent hydrolysis by HslU are essential for unfolding of protein substrates subsequently hydrolyzed by HslV. HslU recognizes the N-terminal part of its protein substrates and unfolds these before they are guided to HslV for hydrolysis. The polypeptide is ATP-dependent protease ATPase subunit HslU (Azotobacter vinelandii (strain DJ / ATCC BAA-1303)).